We begin with the raw amino-acid sequence, 86 residues long: MANIKSQQKRILTNERRRLRNKSVKSSLHTAVRGFREAVESGDKEKAGELLLATSRKLDKAASKGVIHKNQAANRKSALARALNKI.

This sequence belongs to the bacterial ribosomal protein bS20 family.

Its function is as follows. Binds directly to 16S ribosomal RNA. This Mycolicibacterium gilvum (strain PYR-GCK) (Mycobacterium gilvum (strain PYR-GCK)) protein is Small ribosomal subunit protein bS20.